Reading from the N-terminus, the 66-residue chain is Large ribosomal subunit protein bL32 (66 aa).

Belongs to the bacterial ribosomal protein bL32 family.

In Leptospira interrogans serogroup Icterohaemorrhagiae serovar copenhageni (strain Fiocruz L1-130), this protein is Large ribosomal subunit protein bL32.